The chain runs to 467 residues: ATP synthase subunit beta (467 aa).

Residue 152–159 (GGAGVGKT) participates in ATP binding.

This sequence belongs to the ATPase alpha/beta chains family. In terms of assembly, F-type ATPases have 2 components, CF(1) - the catalytic core - and CF(0) - the membrane proton channel. CF(1) has five subunits: alpha(3), beta(3), gamma(1), delta(1), epsilon(1). CF(0) has three main subunits: a(1), b(2) and c(9-12). The alpha and beta chains form an alternating ring which encloses part of the gamma chain. CF(1) is attached to CF(0) by a central stalk formed by the gamma and epsilon chains, while a peripheral stalk is formed by the delta and b chains.

The protein resides in the cell inner membrane. The enzyme catalyses ATP + H2O + 4 H(+)(in) = ADP + phosphate + 5 H(+)(out). Its function is as follows. Produces ATP from ADP in the presence of a proton gradient across the membrane. The catalytic sites are hosted primarily by the beta subunits. The sequence is that of ATP synthase subunit beta from Wolinella succinogenes (strain ATCC 29543 / DSM 1740 / CCUG 13145 / JCM 31913 / LMG 7466 / NCTC 11488 / FDC 602W) (Vibrio succinogenes).